Consider the following 174-residue polypeptide: Repair DNA polymerase X (174 aa).

Residues 42–51 are involved in ssDNA binding; that stretch reads REEKMLNDVD. Residues D49 and D51 each contribute to the Mg(2+) site. A disulfide bridge links C81 with C86. D100 is a binding site for Mg(2+).

This sequence belongs to the DNA polymerase type-X family. Requires Mg(2+) as cofactor.

It is found in the virion. It carries out the reaction DNA(n) + a 2'-deoxyribonucleoside 5'-triphosphate = DNA(n+1) + diphosphate. Its function is as follows. Error-prone polymerase lacking a proofreading 3'-5' exonuclease which catalyzes the gap-filling reaction during the DNA repair process. Specifically binds intermediates in the single-nucleotide base-excision repair process. Also catalyzes DNA polymerization with low nucleotide-insertion fidelity. Probably acts as a strategic DNA mutase, which gives rise to a rapid emergence of variants. Generates mismatched G-G pairs, in that case, the polymerase first binds the deoxynucleotide followed by mismatch formation. Together with the viral DNA ligase, fills the single nucleotide gaps generated by the AP endonuclease. Binds DNA with high affinity via the helix alphaE. This is Repair DNA polymerase X from African swine fever virus (isolate Tick/South Africa/Pretoriuskop Pr4/1996) (ASFV).